Here is a 390-residue protein sequence, read N- to C-terminus: MAFDLAARLAERRAADLYRQRPLLQSPQGPQVVVDGQPLLAFCSNDYLGLANHPDVIQAWRAGAERWGVGGGASHLVIGHSTPHHQVEEALAELTGRPRALLFSTGYMANLGAITALVGQGDTVLQDRLNHASLLDGGLLSGARFSRYLHNDPASLASRLEKATGNTLVVTDGVFSMDGDCANLPALADVARARGAWLMVDDAHGLGTLGANGGGLLEQFGLGVDDVPVLIGTLGKACGTSGAFVVGSEELIEALVQFARPYIYTTSQPPALACATLKALELLRKDTWRREHLAALIRQFREGARQIGLTLMDSHTAIQPILIGDAGRAMALSRKLRERGLLVTAIRPPTVPVGSARLRVTLSAAHSEAQVQLLLNALAECYPQLESADA.

Arg19 is a substrate binding site. 106–107 (GY) lines the pyridoxal 5'-phosphate pocket. Residue His131 participates in substrate binding. Ser176, His204, and Thr233 together coordinate pyridoxal 5'-phosphate. N6-(pyridoxal phosphate)lysine is present on Lys236. Thr350 lines the substrate pocket.

Belongs to the class-II pyridoxal-phosphate-dependent aminotransferase family. BioF subfamily. In terms of assembly, homodimer. Pyridoxal 5'-phosphate is required as a cofactor.

It catalyses the reaction 6-carboxyhexanoyl-[ACP] + L-alanine + H(+) = (8S)-8-amino-7-oxononanoate + holo-[ACP] + CO2. Its pathway is cofactor biosynthesis; biotin biosynthesis. Catalyzes the decarboxylative condensation of pimeloyl-[acyl-carrier protein] and L-alanine to produce 8-amino-7-oxononanoate (AON), [acyl-carrier protein], and carbon dioxide. This chain is 8-amino-7-oxononanoate synthase, found in Pseudomonas entomophila (strain L48).